The chain runs to 439 residues: Tol-Pal system protein TolB (439 aa).

The first 22 residues, 1-22, serve as a signal peptide directing secretion; it reads MTKFPRWLAMLVGLLFPLSALT.

Belongs to the TolB family. As to quaternary structure, the Tol-Pal system is composed of five core proteins: the inner membrane proteins TolA, TolQ and TolR, the periplasmic protein TolB and the outer membrane protein Pal. They form a network linking the inner and outer membranes and the peptidoglycan layer.

The protein resides in the periplasm. Functionally, part of the Tol-Pal system, which plays a role in outer membrane invagination during cell division and is important for maintaining outer membrane integrity. This is Tol-Pal system protein TolB from Xylella fastidiosa (strain 9a5c).